The primary structure comprises 352 residues: MKEQLNQLSAYQPGLSPRALKEKYGIEGDLYKLASNENLYGPSPKVKEAISAHLDELYYYPETGSPTLKAAISKHLNVDQSRILFGAGLDEVILMISRAVLTPGDTIVTSEATFGQYYHNAIVESANVIQVPLKDGGFDLEGILKQVNEDTSLVWLCNPNNPTGTYFNHESLDSFLSQVPPHVPVIIDEAYFEFVTAEDYPDTLALQQKYDNAFLLRTFSKAYGLAGLRVGYVVASEHAIEKWNIIRPPFNVTRISEYAAVAALEDQQYLKEVTHKNSVERERFYQLPQSKHFLPSQTNFIFVKTKRVNELYEALLNVGCITRPFPTGVRITIGFKEQNDKMLEVLSNFKYE.

The residue at position 221 (K221) is an N6-(pyridoxal phosphate)lysine.

The protein belongs to the class-II pyridoxal-phosphate-dependent aminotransferase family. Histidinol-phosphate aminotransferase subfamily. Homodimer. Pyridoxal 5'-phosphate serves as cofactor.

The enzyme catalyses L-histidinol phosphate + 2-oxoglutarate = 3-(imidazol-4-yl)-2-oxopropyl phosphate + L-glutamate. It functions in the pathway amino-acid biosynthesis; L-histidine biosynthesis; L-histidine from 5-phospho-alpha-D-ribose 1-diphosphate: step 7/9. This Staphylococcus aureus (strain bovine RF122 / ET3-1) protein is Histidinol-phosphate aminotransferase.